The primary structure comprises 304 residues: Acetyl-coenzyme A carboxylase carboxyl transferase subunit beta (304 aa).

In terms of domain architecture, CoA carboxyltransferase N-terminal spans 23-292; that stretch reads VWTKCDSCGQ…PNPDAPREGE (270 aa). Residues Cys-27, Cys-30, Cys-46, and Cys-49 each coordinate Zn(2+). The segment at 27–49 adopts a C4-type zinc-finger fold; it reads CDSCGQVLYRAELERNLEVCPKC. Positions 281–304 are disordered; sequence PAPNPDAPREGEVVPPVPDQEPEA. The span at 295–304 shows a compositional bias: pro residues; sequence PPVPDQEPEA.

This sequence belongs to the AccD/PCCB family. As to quaternary structure, acetyl-CoA carboxylase is a heterohexamer composed of biotin carboxyl carrier protein (AccB), biotin carboxylase (AccC) and two subunits each of ACCase subunit alpha (AccA) and ACCase subunit beta (AccD). Zn(2+) is required as a cofactor.

It is found in the cytoplasm. The catalysed reaction is N(6)-carboxybiotinyl-L-lysyl-[protein] + acetyl-CoA = N(6)-biotinyl-L-lysyl-[protein] + malonyl-CoA. It participates in lipid metabolism; malonyl-CoA biosynthesis; malonyl-CoA from acetyl-CoA: step 1/1. Functionally, component of the acetyl coenzyme A carboxylase (ACC) complex. Biotin carboxylase (BC) catalyzes the carboxylation of biotin on its carrier protein (BCCP) and then the CO(2) group is transferred by the transcarboxylase to acetyl-CoA to form malonyl-CoA. The chain is Acetyl-coenzyme A carboxylase carboxyl transferase subunit beta from Citrobacter koseri (strain ATCC BAA-895 / CDC 4225-83 / SGSC4696).